The primary structure comprises 368 residues: DNA replication and repair protein RecF (368 aa).

Residue 30–37 (GRNGSGKT) participates in ATP binding.

Belongs to the RecF family.

The protein resides in the cytoplasm. The RecF protein is involved in DNA metabolism; it is required for DNA replication and normal SOS inducibility. RecF binds preferentially to single-stranded, linear DNA. It also seems to bind ATP. This chain is DNA replication and repair protein RecF, found in Chlorobaculum parvum (strain DSM 263 / NCIMB 8327) (Chlorobium vibrioforme subsp. thiosulfatophilum).